Reading from the N-terminus, the 262-residue chain is Small ribosomal subunit protein uS2 (262 aa).

The segment at 223 to 262 (KSLLEQDGGEQAAGEEVSQDEKDAVVAEAMSEEDFGEDEE) is disordered. Residues 227 to 238 (EQDGGEQAAGEE) are compositionally biased toward low complexity. A compositionally biased stretch (acidic residues) spans 252–262 (MSEEDFGEDEE).

It belongs to the universal ribosomal protein uS2 family.

This Campylobacter concisus (strain 13826) protein is Small ribosomal subunit protein uS2.